The following is a 250-amino-acid chain: UDP-2,3-diacylglucosamine hydrolase (250 aa).

5 residues coordinate Mn(2+): aspartate 8, histidine 10, aspartate 41, asparagine 79, and histidine 114. Position 79–80 (asparagine 79–arginine 80) interacts with substrate. 5 residues coordinate substrate: aspartate 122, serine 160, aspartate 172, glutamine 175, and histidine 203. Histidine 203 and histidine 205 together coordinate Mn(2+).

Belongs to the LpxH family. It depends on Mn(2+) as a cofactor.

The protein localises to the cell inner membrane. It carries out the reaction UDP-2-N,3-O-bis[(3R)-3-hydroxytetradecanoyl]-alpha-D-glucosamine + H2O = 2-N,3-O-bis[(3R)-3-hydroxytetradecanoyl]-alpha-D-glucosaminyl 1-phosphate + UMP + 2 H(+). It functions in the pathway glycolipid biosynthesis; lipid IV(A) biosynthesis; lipid IV(A) from (3R)-3-hydroxytetradecanoyl-[acyl-carrier-protein] and UDP-N-acetyl-alpha-D-glucosamine: step 4/6. Functionally, hydrolyzes the pyrophosphate bond of UDP-2,3-diacylglucosamine to yield 2,3-diacylglucosamine 1-phosphate (lipid X) and UMP by catalyzing the attack of water at the alpha-P atom. Involved in the biosynthesis of lipid A, a phosphorylated glycolipid that anchors the lipopolysaccharide to the outer membrane of the cell. This chain is UDP-2,3-diacylglucosamine hydrolase, found in Xylella fastidiosa (strain M12).